The following is a 925-amino-acid chain: Bifunctional imidazolonepropionase/histidine ammonia-lyase (925 aa).

The segment at 1-414 (MTKNSSTVFT…IKPHVRMEPF (414 aa)) is imidazolonepropionase. Positions 73 and 75 each coordinate Fe(3+). His-73 and His-75 together coordinate Zn(2+). 3 residues coordinate 4-imidazolone-5-propanoate: Arg-82, Tyr-145, and His-178. Tyr-145 is a binding site for N-formimidoyl-L-glutamate. His-243 is a Fe(3+) binding site. Residue His-243 participates in Zn(2+) binding. Gln-246 lines the 4-imidazolone-5-propanoate pocket. Residue Asp-318 participates in Fe(3+) binding. Asp-318 contributes to the Zn(2+) binding site. Asn-320 and Gly-322 together coordinate N-formimidoyl-L-glutamate. Thr-323 provides a ligand contact to 4-imidazolone-5-propanoate. Residues 415-925 (MTIILKPGSV…SAGILPDLEA (511 aa)) are histidine ammonia-lyase. Residues 556–558 (ASG) constitute a cross-link (5-imidazolinone (Ala-Gly)). Ser-557 carries the 2,3-didehydroalanine (Ser) modification.

The protein in the N-terminal section; belongs to the metallo-dependent hydrolases superfamily. HutI family. In the C-terminal section; belongs to the PAL/histidase family. The cofactor is Zn(2+). It depends on Fe(3+) as a cofactor. Post-translationally, contains an active site 4-methylidene-imidazol-5-one (MIO), which is formed autocatalytically by cyclization and dehydration of residues Ala-Ser-Gly.

The protein localises to the cytoplasm. It catalyses the reaction 4-imidazolone-5-propanoate + H2O = N-formimidoyl-L-glutamate. The enzyme catalyses L-histidine = trans-urocanate + NH4(+). Its pathway is amino-acid degradation; L-histidine degradation into L-glutamate; N-formimidoyl-L-glutamate from L-histidine: step 1/3. The protein operates within amino-acid degradation; L-histidine degradation into L-glutamate; N-formimidoyl-L-glutamate from L-histidine: step 3/3. Catalyzes the hydrolytic cleavage of the carbon-nitrogen bond in imidazolone-5-propanoate to yield N-formimidoyl-L-glutamate. It is the third step in the universal histidine degradation pathway. This Brucella melitensis biotype 1 (strain ATCC 23456 / CCUG 17765 / NCTC 10094 / 16M) protein is Bifunctional imidazolonepropionase/histidine ammonia-lyase (hutIH).